The primary structure comprises 453 residues: Serine incorporator 1 (453 aa).

Residue G2 is the site of N-myristoyl glycine attachment. The Cytoplasmic segment spans residues 2–39 (GSVLGLCSVASWIPCLCGSAPCLLCRCCPSGNNSTVTR). A helical membrane pass occupies residues 40–60 (LIYALFLLVGVCVACVMLIPG). The Lumenal portion of the chain corresponds to 61-88 (MEEQLNKIPGFCENEKGVVPCNILVGYK). The chain crosses the membrane as a helical span at residues 89-109 (AVYRLCFGLAMFYLLLSLLMI). The Cytoplasmic segment spans residues 110 to 123 (KVKSSSDPRAAVHN). Residues 124–144 (GFWFFKFATAVAIIIGAFFIP) form a helical membrane-spanning segment. Residues 145-151 (EGTFTTV) lie on the Lumenal side of the membrane. Residues 152–172 (WFYVGMAGAFCFILIQLVLLI) traverse the membrane as a helical segment. At 173–197 (DFAHSWNESWVEKMEEGNSRCWYAA) the chain is on the cytoplasmic side. The chain crosses the membrane as a helical span at residues 198-218 (LLSATALNYLLSLVAVVLFFV). At 219 to 231 (YYTHPASCAENKA) the chain is on the lumenal side. A helical transmembrane segment spans residues 232 to 252 (FISVNMLLCIGASVMSILPKI). The Cytoplasmic segment spans residues 253-259 (QESQPRS). A helical transmembrane segment spans residues 260 to 280 (GLLQSSVITVYTMYLTWSAMT). At 281–309 (NEPETNCNPSLLSIIGFNTTRPIPKDGQS) the chain is on the lumenal side. A helical membrane pass occupies residues 310 to 330 (VQWWHPQGIIGLVLFLLCVFY). Over 331–387 (SSIRTSNNSQVNKLTLTSDESTLIEDGNGRSDGSLDDGDGIHRAVDNERDGVTYSYS) the chain is Cytoplasmic. S351 bears the Phosphoserine mark. T352 bears the Phosphothreonine mark. Residues S361 and S364 each carry the phosphoserine modification. A helical transmembrane segment spans residues 388-408 (FFHFMLFLASLYIMMTLTNWY). Residues 409–426 (RYEPSREMKSQWTAVWVK) are Lumenal-facing. A helical membrane pass occupies residues 427–447 (ISSSWIGLVLYVWTLVAPLVL). Topologically, residues 448–453 (TNRDFD) are cytoplasmic.

This sequence belongs to the TDE1 family. In terms of assembly, interacts with SPTLC1. In terms of tissue distribution, highly expressed in the neuronal populations such as Purkinje cells in the cerebellum, brainstem and spinal motor neurons, locus coeruleus and raphe nuclei.

Its subcellular location is the endoplasmic reticulum membrane. Its function is as follows. Enhances the incorporation of serine into phosphatidylserine and sphingolipids. The protein is Serine incorporator 1 (Serinc1) of Mus musculus (Mouse).